We begin with the raw amino-acid sequence, 373 residues long: Transcription factor SPATULA (373 aa).

Residues 1–21 are compositionally biased toward basic and acidic residues; it reads MISQREEREEKKQRVMGDKKL. 2 disordered regions span residues 1–46 and 141–210; these read MISQ…PSSS and VQGN…KRRR. Residues 141–160 show a composition bias toward low complexity; that stretch reads VQGNSSGTRVSSSSVGASGN. Positions 161-177 are enriched in acidic residues; it reads ETDEYDCESEEGGEAVV. Over residues 182 to 191 the composition is skewed to low complexity; the sequence is SSKSGPSSRS. A compositionally biased stretch (basic and acidic residues) spans 197-210; it reads RAAEVHNLSEKRRR. One can recognise a bHLH domain in the interval 197–246; that stretch reads RAAEVHNLSEKRRRSRINEKMKALQSLIPNSNKTDKASMLDEAIEYLKQL.

As to quaternary structure, homodimer. Interacts with HEC1, HEC2 and HEC3. Binds to RGL2 and RGA. Expressed in lateral root caps, young leaves, stipules, maturing pith cells of the stem, differentiating vascular cells, shoot apical meristems and flowers.

The protein localises to the nucleus. In terms of biological role, transcription factor that plays a role in floral organogenesis. Promotes the growth of carpel margins and of pollen tract tissues derived from them. The sequence is that of Transcription factor SPATULA (SPT) from Arabidopsis thaliana (Mouse-ear cress).